The sequence spans 342 residues: GTPase Obg (342 aa).

An Obg domain is found at 1–159 (MQFIDRAEIE…RNLRLELKLL (159 aa)). An OBG-type G domain is found at 160 to 328 (AEVGIIGLPN…LLQAIWHRLD (169 aa)). GTP-binding positions include 166 to 173 (GLPNAGKS), 191 to 195 (FTTLV), 213 to 216 (DIPG), 280 to 283 (NKVD), and 309 to 311 (SAV). Positions 173 and 193 each coordinate Mg(2+).

It belongs to the TRAFAC class OBG-HflX-like GTPase superfamily. OBG GTPase family. In terms of assembly, monomer. Mg(2+) is required as a cofactor.

The protein resides in the cytoplasm. Functionally, an essential GTPase which binds GTP, GDP and possibly (p)ppGpp with moderate affinity, with high nucleotide exchange rates and a fairly low GTP hydrolysis rate. Plays a role in control of the cell cycle, stress response, ribosome biogenesis and in those bacteria that undergo differentiation, in morphogenesis control. This chain is GTPase Obg, found in Crocosphaera subtropica (strain ATCC 51142 / BH68) (Cyanothece sp. (strain ATCC 51142)).